Reading from the N-terminus, the 165-residue chain is 2-C-methyl-D-erythritol 2,4-cyclodiphosphate synthase (165 aa).

A divalent metal cation-binding residues include D12 and H14. Residues 12–14 (DIH) and 38–39 (HS) contribute to the 4-CDP-2-C-methyl-D-erythritol 2-phosphate site. Position 46 (H46) interacts with a divalent metal cation. Residues 60 to 62 (DIG), 136 to 139 (TTNE), and R146 each bind 4-CDP-2-C-methyl-D-erythritol 2-phosphate.

It belongs to the IspF family. Homotrimer. A divalent metal cation serves as cofactor.

The enzyme catalyses 4-CDP-2-C-methyl-D-erythritol 2-phosphate = 2-C-methyl-D-erythritol 2,4-cyclic diphosphate + CMP. Its pathway is isoprenoid biosynthesis; isopentenyl diphosphate biosynthesis via DXP pathway; isopentenyl diphosphate from 1-deoxy-D-xylulose 5-phosphate: step 4/6. Its function is as follows. Involved in the biosynthesis of isopentenyl diphosphate (IPP) and dimethylallyl diphosphate (DMAPP), two major building blocks of isoprenoid compounds. Catalyzes the conversion of 4-diphosphocytidyl-2-C-methyl-D-erythritol 2-phosphate (CDP-ME2P) to 2-C-methyl-D-erythritol 2,4-cyclodiphosphate (ME-CPP) with a corresponding release of cytidine 5-monophosphate (CMP). The polypeptide is 2-C-methyl-D-erythritol 2,4-cyclodiphosphate synthase (Nostoc sp. (strain PCC 7120 / SAG 25.82 / UTEX 2576)).